A 553-amino-acid polypeptide reads, in one-letter code: Hydroxylamine reductase (553 aa).

[4Fe-4S] cluster-binding residues include C3, C6, C15, and C21. Hybrid [4Fe-2O-2S] cluster-binding residues include H244, E268, C312, C406, C434, C459, E494, and K496. Cysteine persulfide is present on C406.

It belongs to the HCP family. As to quaternary structure, monomer. It depends on [4Fe-4S] cluster as a cofactor. The cofactor is hybrid [4Fe-2O-2S] cluster.

The protein localises to the cytoplasm. It catalyses the reaction A + NH4(+) + H2O = hydroxylamine + AH2 + H(+). Functionally, catalyzes the reduction of hydroxylamine to form NH(3) and H(2)O. The protein is Hydroxylamine reductase of Nitratidesulfovibrio vulgaris (strain ATCC 29579 / DSM 644 / CCUG 34227 / NCIMB 8303 / VKM B-1760 / Hildenborough) (Desulfovibrio vulgaris).